A 598-amino-acid chain; its full sequence is Chaperone protein DnaK (598 aa).

Thr180 is subject to Phosphothreonine; by autocatalysis.

This sequence belongs to the heat shock protein 70 family.

Its function is as follows. Acts as a chaperone. In Thermosipho africanus (strain TCF52B), this protein is Chaperone protein DnaK.